A 638-amino-acid chain; its full sequence is 1-deoxy-D-xylulose-5-phosphate synthase (638 aa).

Thiamine diphosphate-binding positions include His-78 and 119–121 (GHS). Asp-151 is a binding site for Mg(2+). Thiamine diphosphate is bound by residues 152 to 153 (GA), Asn-180, Tyr-289, and Glu-371. Residue Asn-180 participates in Mg(2+) binding.

The protein belongs to the transketolase family. DXPS subfamily. In terms of assembly, homodimer. Mg(2+) is required as a cofactor. It depends on thiamine diphosphate as a cofactor.

The catalysed reaction is D-glyceraldehyde 3-phosphate + pyruvate + H(+) = 1-deoxy-D-xylulose 5-phosphate + CO2. Its pathway is metabolic intermediate biosynthesis; 1-deoxy-D-xylulose 5-phosphate biosynthesis; 1-deoxy-D-xylulose 5-phosphate from D-glyceraldehyde 3-phosphate and pyruvate: step 1/1. Catalyzes the acyloin condensation reaction between C atoms 2 and 3 of pyruvate and glyceraldehyde 3-phosphate to yield 1-deoxy-D-xylulose-5-phosphate (DXP). The protein is 1-deoxy-D-xylulose-5-phosphate synthase of Bartonella bacilliformis (strain ATCC 35685 / KC583 / Herrer 020/F12,63).